The chain runs to 1207 residues: Systemin receptor SR160 (1207 aa).

A signal peptide spans 1–34 (MKAHKTVFNQHPLSLNKLFFVLLLIFFLPPASPA). The Cys pair 1 signature appears at 71 to 78 (CSFTGVSC). LRR repeat units lie at residues 109 to 131 (NLES…AKSQ), 135 to 157 (TLDS…SSFG), 161 to 181 (NLKS…EMLK), 186 to 207 (SLQV…PWVS), 213 to 234 (ELEF…LDFK), 235 to 257 (NLSY…KDCS), 258 to 280 (NLQH…LSSC), 282 to 304 (KLSF…PSES), 305 to 325 (LQYL…QLAD), 329 to 350 (TVVE…SLGE), 353 to 375 (SLEL…TLLK), 378 to 401 (NIKT…SNLP), 402 to 423 (KLET…GICK), 428 to 450 (NLKV…LSNC), 452 to 474 (QLVS…LGSL), 476 to 499 (KLKD…MYLQ), 500 to 523 (ALEN…SNCT), 524 to 547 (KLNW…GRLS), 548 to 570 (NLAI…LGNC), and 572 to 594 (SLIW…LFKQ). The N-linked (GlcNAc...) asparagine glycan is linked to N119. Residues N166 and N196 are each glycosylated (N-linked (GlcNAc...) asparagine). N-linked (GlcNAc...) asparagine glycans are attached at residues N235 and N245. N287 carries an N-linked (GlcNAc...) asparagine glycan. 2 N-linked (GlcNAc...) asparagine glycosylation sites follow: N339 and N363. N412 and N449 each carry an N-linked (GlcNAc...) asparagine glycan. The N-linked (GlcNAc...) asparagine glycan is linked to N521. N-linked (GlcNAc...) asparagine glycosylation is found at N556, N584, N646, and N662. 4 LRR repeats span residues 664 to 686 (SMIF…LGAM), 688 to 711 (YLSI…GGLK), 712 to 735 (NVAI…TSLT), and 736 to 758 (LLGE…APFD). N-linked (GlcNAc...) asparagine glycans are attached at residues N724, N746, and N767. The Cys pair 2 motif lies at 771–779 (CGYPLPLPC). A helical membrane pass occupies residues 803–823 (SVAMGLLFSLFCIFGLIIVAI). Positions 888 to 1163 (FHNDSLVGSG…IQVMAMFKEI (276 aa)) constitute a Protein kinase domain. Residues 894–902 (VGSGGFGDV) and K916 contribute to the ATP site. D1014 (proton acceptor) is an active-site residue.

The protein belongs to the protein kinase superfamily. Ser/Thr protein kinase family. In terms of processing, glycosylated.

It is found in the cell membrane. The catalysed reaction is L-seryl-[protein] + ATP = O-phospho-L-seryl-[protein] + ADP + H(+). The enzyme catalyses L-threonyl-[protein] + ATP = O-phospho-L-threonyl-[protein] + ADP + H(+). In terms of biological role, receptor with a serine/threonine-protein kinase activity. Involved in the perception of systemin, a peptide hormone responsible for the systemic activation of defense genes in leaves of wounded plants. May also regulate, in response to brassinosteroid binding, a signaling cascade involved in plant development. This Solanum peruvianum (Peruvian tomato) protein is Systemin receptor SR160.